The sequence spans 399 residues: Beta-1,4-galactosyltransferase 1 (399 aa).

At 1–24 the chain is on the cytoplasmic side; the sequence is MRFREQFLGGSAAMPGATLQRACR. The helical; Signal-anchor for type II membrane protein transmembrane segment at 25–44 threads the bilayer; that stretch reads LLVAVCALHLGVTLVYYLSG. Topologically, residues 45–399 are lumenal; it reads RDLSRLPQLV…QITVDIGTPR (355 aa). The segment at 61 to 113 is disordered; the sequence is QGGTNGAAASKQPPGEQRPRGARPPPPLGVSPKPRPGLDSSPGAASGPGLKSN. Residues 82–95 show a composition bias toward pro residues; it reads ARPPPPLGVSPKPR. N-linked (GlcNAc...) asparagine glycosylation occurs at Asn113. Residues Cys131 and Cys173 are joined by a disulfide bond. UDP-alpha-D-galactose-binding positions include 184–188, 223–225, 250–251, and Trp311; these read PFRNR, FNR, and VD. The cysteines at positions 244 and 263 are disulfide-linked. Asp251 provides a ligand contact to Mn(2+). Residue 313 to 316 participates in N-acetyl-D-glucosamine binding; that stretch reads GEDD. His344 contacts Mn(2+). A UDP-alpha-D-galactose-binding site is contributed by 344–346; it reads HSR. Arg356 lines the N-acetyl-D-glucosamine pocket.

This sequence belongs to the glycosyltransferase 7 family. As to quaternary structure, homodimer; and heterodimer with alpha-lactalbumin to form lactose synthase. Interacts (via N-terminal cytoplasmic domain) with UBE2Q1 (via N-terminus); the interaction is direct. The cofactor is Mn(2+). The soluble form derives from the membrane forms by proteolytic processing.

It localises to the golgi apparatus. The protein localises to the golgi stack membrane. Its subcellular location is the cell membrane. The protein resides in the cell surface. It is found in the cell projection. It localises to the filopodium. The protein localises to the secreted. The catalysed reaction is D-glucose + UDP-alpha-D-galactose = lactose + UDP + H(+). It carries out the reaction an N-acetyl-beta-D-glucosaminyl derivative + UDP-alpha-D-galactose = a beta-D-galactosyl-(1-&gt;4)-N-acetyl-beta-D-glucosaminyl derivative + UDP + H(+). The enzyme catalyses N-acetyl-D-glucosamine + UDP-alpha-D-galactose = beta-D-galactosyl-(1-&gt;4)-N-acetyl-D-glucosamine + UDP + H(+). It catalyses the reaction a beta-D-GlcNAc-(1-&gt;3)-beta-D-Gal-(1-&gt;4)-beta-D-Glc-(1&lt;-&gt;1)-Cer(d18:1(4E)) + UDP-alpha-D-galactose = a neolactoside nLc4Cer(d18:1(4E)) + UDP + H(+). The catalysed reaction is a beta-D-glucosylceramide + UDP-alpha-D-galactose = a beta-D-galactosyl-(1-&gt;4)-beta-D-glucosyl-(1&lt;-&gt;1)-ceramide + UDP + H(+). It carries out the reaction a neolactoside IV(3)-beta-GlcNAc-nLc4Cer + UDP-alpha-D-galactose = a neolactoside nLc6Cer + UDP + H(+). It functions in the pathway protein modification; protein glycosylation. In terms of biological role, the Golgi complex form catalyzes the production of lactose in the lactating mammary gland and could also be responsible for the synthesis of complex-type N-linked oligosaccharides in many glycoproteins as well as the carbohydrate moieties of glycolipids. Its function is as follows. The cell surface form functions as a recognition molecule during a variety of cell to cell and cell to matrix interactions, as those occurring during development and egg fertilization, by binding to specific oligosaccharide ligands on opposing cells or in the extracellular matrix. The secreted form is responsible for the synthesis of complex-type to N-linked oligosaccharides in many glycoproteins as well as the carbohydrate moieties of glycolipids. In Mus musculus (Mouse), this protein is Beta-1,4-galactosyltransferase 1.